The chain runs to 300 residues: PTB domain-containing engulfment adapter protein 1 (300 aa).

The PID domain occupies 21-176; that stretch reads AKHFIPYNAK…GGLQKRIQDL (156 aa). Residues 160 to 199 adopt a coiled-coil conformation; the sequence is VETRKQIGGLQKRIQDLETENVELKKQLQVLEEQLMIAQV.

The protein belongs to the ced-6 family.

It localises to the cytoplasm. In terms of biological role, may function as an adapter protein. Required for efficient phagocytosis of apoptotic cells. May play a role in the internalization and endosomal trafficking of various lrp1 ligands. The protein is PTB domain-containing engulfment adapter protein 1 (gulp1) of Danio rerio (Zebrafish).